Here is an 830-residue protein sequence, read N- to C-terminus: Ent-cassa-12,15-diene synthase (830 aa).

The segment at 1–50 (MMLLGSPSSGGYGGKFAGASPAGGTTTMAPSAKQPSSRAPPPGITGGRND) is disordered. Polar residues predominate over residues 23 to 37 (GGTTTMAPSAKQPSS). Residues Asp577, Asp581, Asn721, and Glu729 each coordinate Mg(2+). A DDXXD motif motif is present at residues 577–581 (DDLFD).

This sequence belongs to the terpene synthase family. Mg(2+) is required as a cofactor. Expressed in roots and stems.

It catalyses the reaction ent-copalyl diphosphate = ent-cassa-12,15-diene + diphosphate. Involved in phytocassane phytoalexins biosynthesis. Catalyzes the conversion of ent-copalyl diphosphate to the phytoalexin precursor ent-cassa-12,15-diene. The protein is Ent-cassa-12,15-diene synthase (KSL7) of Oryza sativa subsp. indica (Rice).